The following is a 595-amino-acid chain: Protein LUTEIN DEFICIENT 5, chloroplastic (595 aa).

Residues 1-28 (MAMAFPLSYTPTITVKPVTYSRRSNFVV) constitute a chloroplast transit peptide. C516 lines the heme pocket.

Belongs to the cytochrome P450 family. Heme is required as a cofactor.

The protein localises to the plastid. It localises to the chloroplast. Heme-containing cytochrome P450 involved in the biosynthesis of xanthophylls. Specific for beta-ring hydroxylation of alpha- and beta-carotene. Also has a low activity toward the epsilon-rings of alpha-carotene. The beta-ring of alpha-carotene is the preferred substrate in planta. The sequence is that of Protein LUTEIN DEFICIENT 5, chloroplastic (CYP97A3) from Arabidopsis thaliana (Mouse-ear cress).